We begin with the raw amino-acid sequence, 347 residues long: Globoside alpha-1,3-N-acetylgalactosaminyltransferase 1 (347 aa).

Over 1 to 5 the chain is Cytoplasmic; the sequence is MHRRR. A helical; Signal-anchor for type II membrane protein transmembrane segment spans residues 6–26; it reads LALGLGFCLLAGTSLSVLWVY. Residues 27 to 347 are Lumenal-facing; it reads LENWLPVSYV…LDKDISCLRS (321 aa). Asparagine 108 carries an N-linked (GlcNAc...) asparagine glycan. Substrate-binding positions include 116-121, 206-208, and 228-231; these read FAVGKY, DVD, and HPSY. Mn(2+) contacts are provided by aspartate 206 and aspartate 208. The active-site Nucleophile is the glutamate 298.

The protein belongs to the glycosyltransferase 6 family. It depends on Mn(2+) as a cofactor. As to expression, widely expressed. Expressed at higher level in placenta, ovary and peripheral blood leukocyte, whereas it is weakly expressed in liver, thymus, and testis. Expressed in bone marrow erythroid cells.

It localises to the golgi apparatus membrane. It functions in the pathway protein modification; protein glycosylation. Has lost the ability to synthesize Forssman glycolipid antigen (FORS1/FG). Might have acquired an alternative function in glycosphingolipid metabolism, but it remains to be established. It appears to have drifted more slowly than confirmed pseudogenes in the glycosyltransferase 6 family, suggesting that it has remained under evolutionary pressure. This is Globoside alpha-1,3-N-acetylgalactosaminyltransferase 1 from Homo sapiens (Human).